Reading from the N-terminus, the 248-residue chain is UPF0736 protein BCE_1296 (248 aa).

It belongs to the UPF0736 family.

The chain is UPF0736 protein BCE_1296 from Bacillus cereus (strain ATCC 10987 / NRS 248).